A 77-amino-acid polypeptide reads, in one-letter code: NAD(P)H-quinone oxidoreductase subunit L (77 aa).

2 helical membrane-spanning segments follow: residues 12–32 (LVAY…ILFY) and 47–67 (LIVY…SPFL).

The protein belongs to the complex I NdhL subunit family. NDH-1 can be composed of about 15 different subunits; different subcomplexes with different compositions have been identified which probably have different functions.

The protein localises to the cellular thylakoid membrane. It catalyses the reaction a plastoquinone + NADH + (n+1) H(+)(in) = a plastoquinol + NAD(+) + n H(+)(out). The catalysed reaction is a plastoquinone + NADPH + (n+1) H(+)(in) = a plastoquinol + NADP(+) + n H(+)(out). NDH-1 shuttles electrons from an unknown electron donor, via FMN and iron-sulfur (Fe-S) centers, to quinones in the respiratory and/or the photosynthetic chain. The immediate electron acceptor for the enzyme in this species is believed to be plastoquinone. Couples the redox reaction to proton translocation, and thus conserves the redox energy in a proton gradient. Cyanobacterial NDH-1 also plays a role in inorganic carbon-concentration. The polypeptide is NAD(P)H-quinone oxidoreductase subunit L (Prochlorococcus marinus subsp. pastoris (strain CCMP1986 / NIES-2087 / MED4)).